The sequence spans 416 residues: Serine hydroxymethyltransferase (416 aa).

(6S)-5,6,7,8-tetrahydrofolate contacts are provided by residues Leu121 and 125–127 (GHL). Lys229 carries the N6-(pyridoxal phosphate)lysine modification. 354–356 (SPF) contributes to the (6S)-5,6,7,8-tetrahydrofolate binding site.

It belongs to the SHMT family. As to quaternary structure, homodimer. The cofactor is pyridoxal 5'-phosphate.

The protein localises to the cytoplasm. The enzyme catalyses (6R)-5,10-methylene-5,6,7,8-tetrahydrofolate + glycine + H2O = (6S)-5,6,7,8-tetrahydrofolate + L-serine. The protein operates within one-carbon metabolism; tetrahydrofolate interconversion. It functions in the pathway amino-acid biosynthesis; glycine biosynthesis; glycine from L-serine: step 1/1. Its function is as follows. Catalyzes the reversible interconversion of serine and glycine with tetrahydrofolate (THF) serving as the one-carbon carrier. This reaction serves as the major source of one-carbon groups required for the biosynthesis of purines, thymidylate, methionine, and other important biomolecules. Also exhibits THF-independent aldolase activity toward beta-hydroxyamino acids, producing glycine and aldehydes, via a retro-aldol mechanism. This chain is Serine hydroxymethyltransferase, found in Halorhodospira halophila (strain DSM 244 / SL1) (Ectothiorhodospira halophila (strain DSM 244 / SL1)).